A 258-amino-acid chain; its full sequence is Regulatory protein RecX (258 aa).

This sequence belongs to the RecX family.

It localises to the cytoplasm. Modulates RecA activity. In Streptococcus uberis (strain ATCC BAA-854 / 0140J), this protein is Regulatory protein RecX.